The following is an 81-amino-acid chain: uncharacterized protein (81 aa).

A disordered region spans residues 55 to 81 (LDKRNSNNKIEKSENTGENHDNNQDQK).

This is an uncharacterized protein from Thermoproteus tenax virus 1 (strain KRA1) (TTV1).